Reading from the N-terminus, the 1305-residue chain is Contactin-associated protein-like 5 (1305 aa).

Residues 1–24 form the signal peptide; it reads MDSVPRLTGVFTLLLSGLWHLGSS. The Extracellular portion of the chain corresponds to 25-1236; it reads ATNYNCDDPL…PLTNAVRSDS (1212 aa). Residues 30–174 form the F5/8 type C domain; the sequence is CDDPLASLLS…IGMRVEVYGC (145 aa). Residues cysteine 30 and cysteine 174 are joined by a disulfide bond. Laminin G-like domains are found at residues 180–360 and 367–544; these read VADF…TFSC and PITF…IDLC. Residues asparagine 282, asparagine 355, and asparagine 496 are each glycosylated (N-linked (GlcNAc...) asparagine). Cysteines 329 and 360 form a disulfide. Disulfide bonds link cysteine 512–cysteine 544, cysteine 550–cysteine 561, cysteine 555–cysteine 570, and cysteine 572–cysteine 582. The region spanning 546 to 583 is the EGF-like 1 domain; sequence IKDRCLPNYCEHGGFCSQSWTTFYCNCSNTGYTGATCH. Residues 584-790 enclose the Fibrinogen C-terminal domain; sequence NSLYEQSCEV…LRCYGDRHFW (207 aa). The N-linked (GlcNAc...) asparagine glycan is linked to asparagine 622. In terms of domain architecture, Laminin G-like 3 spans 791-956; sequence NAVSFYTEAS…KVTSGVRPGC (166 aa). Intrachain disulfides connect cysteine 929-cysteine 956, cysteine 960-cysteine 973, cysteine 967-cysteine 982, cysteine 984-cysteine 994, and cysteine 1163-cysteine 1198. The region spanning 957 to 995 is the EGF-like 2 domain; that stretch reads PGHCSTYGSICHNGGKCVEKYSGYFCDCTNSPYEGPFCK. In terms of domain architecture, Laminin G-like 4 spans 1000–1198; sequence AVFEAGTSVT…VQGTLMESSC (199 aa). Residues 1237-1257 traverse the membrane as a helical segment; the sequence is AVIGGVIAVVIFIIFSIIGIM. Topologically, residues 1258 to 1305 are cytoplasmic; it reads TRFLYQHKQSHRTNQMKEKEYPENLDSSFRNDIDLQNTVSECKREYFI.

Belongs to the neurexin family.

The protein resides in the membrane. Functionally, may play a role in the correct development and proper functioning of the peripheral and central nervous system and be involved in cell adhesion and intercellular communication. In Canis lupus familiaris (Dog), this protein is Contactin-associated protein-like 5 (CNTNAP5).